Here is a 291-residue protein sequence, read N- to C-terminus: ATP synthase gamma chain (291 aa).

Belongs to the ATPase gamma chain family. In terms of assembly, F-type ATPases have 2 components, CF(1) - the catalytic core - and CF(0) - the membrane proton channel. CF(1) has five subunits: alpha(3), beta(3), gamma(1), delta(1), epsilon(1). CF(0) has three main subunits: a, b and c.

The protein resides in the cell inner membrane. Functionally, produces ATP from ADP in the presence of a proton gradient across the membrane. The gamma chain is believed to be important in regulating ATPase activity and the flow of protons through the CF(0) complex. The protein is ATP synthase gamma chain of Roseobacter denitrificans (strain ATCC 33942 / OCh 114) (Erythrobacter sp. (strain OCh 114)).